The sequence spans 418 residues: Dihydrolipoyllysine-residue acetyltransferase component of pyruvate dehydrogenase complex (418 aa).

Residues 2–78 (PIKLLMPALS…PVNSLIAVLI (77 aa)) enclose the Lipoyl-binding domain. Lysine 43 is modified (N6-lipoyllysine). A Peripheral subunit-binding (PSBD) domain is found at 133 to 170 (FASPLAKRLAKIQNVRIEEIKGSGPHGRIIKQDVLSHK). Histidine 388 is a catalytic residue.

Belongs to the 2-oxoacid dehydrogenase family. In terms of assembly, forms a 24-polypeptide structural core with octahedral symmetry. The cofactor is (R)-lipoate.

The catalysed reaction is N(6)-[(R)-dihydrolipoyl]-L-lysyl-[protein] + acetyl-CoA = N(6)-[(R)-S(8)-acetyldihydrolipoyl]-L-lysyl-[protein] + CoA. Its function is as follows. The pyruvate dehydrogenase complex catalyzes the overall conversion of pyruvate to acetyl-CoA and CO(2). It contains multiple copies of three enzymatic components: pyruvate dehydrogenase (E1), dihydrolipoamide acetyltransferase (E2) and lipoamide dehydrogenase (E3). The protein is Dihydrolipoyllysine-residue acetyltransferase component of pyruvate dehydrogenase complex (pdhC) of Rickettsia bellii (strain RML369-C).